The following is a 486-amino-acid chain: Ribulose bisphosphate carboxylase large chain, plasmid (486 aa).

Positions 126 and 176 each coordinate substrate. Catalysis depends on Lys178, which acts as the Proton acceptor. Residue Lys180 coordinates substrate. Residues Lys204, Asp206, and Glu207 each coordinate Mg(2+). Position 204 is an N6-carboxylysine (Lys204). His296 acts as the Proton acceptor in catalysis. Substrate contacts are provided by Arg297, His329, and Ser381.

The protein belongs to the RuBisCO large chain family. Type I subfamily. In terms of assembly, heterohexadecamer of 8 large chains and 8 small chains. It depends on Mg(2+) as a cofactor.

It catalyses the reaction 2 (2R)-3-phosphoglycerate + 2 H(+) = D-ribulose 1,5-bisphosphate + CO2 + H2O. It carries out the reaction D-ribulose 1,5-bisphosphate + O2 = 2-phosphoglycolate + (2R)-3-phosphoglycerate + 2 H(+). RuBisCO catalyzes two reactions: the carboxylation of D-ribulose 1,5-bisphosphate, the primary event in carbon dioxide fixation, as well as the oxidative fragmentation of the pentose substrate. Both reactions occur simultaneously and in competition at the same active site. In Cupriavidus necator (strain ATCC 17699 / DSM 428 / KCTC 22496 / NCIMB 10442 / H16 / Stanier 337) (Ralstonia eutropha), this protein is Ribulose bisphosphate carboxylase large chain, plasmid (cbbL2).